Here is a 149-residue protein sequence, read N- to C-terminus: Oocyte-expressed protein (149 aa).

Residues 49 to 110 (PLVFYLEAWL…RVQNRVKSVL (62 aa)) form the KH; atypical domain.

The protein belongs to the KHDC1 family. As to quaternary structure, component of the subcortical maternal complex (SCMC), at least composed of NLRP5, KHDC3, OOEP, and TLE6. Within the complex, interacts with NLRP5, KHDC3 and TLE6. As part of the SCMC interacts with the SCMC-associated protein NLRP4F. The SCMC may facilitate translocation of its components between the nuclear and cytoplasmic compartments. Forms a scaffold complex with KHDC3/FILIA, and interacts with BLM and TRIM25 at DNA replication forks.

It localises to the cytoplasm. It is found in the nucleus. Its function is as follows. Component of the subcortical maternal complex (SCMC), a multiprotein complex that plays a key role in early embryonic development. The SCMC complex is a structural constituent of cytoplasmic lattices, which consist in fibrous structures found in the cytoplasm of oocytes and preimplantation embryos. They are required to store maternal proteins critical for embryonic development, such as proteins that control epigenetic reprogramming of the preimplantation embryo, and prevent their degradation or activation. As part of the OOEP-KHDC3 scaffold, recruits BLM and TRIM25 to DNA replication forks, thereby promoting the ubiquitination of BLM by TRIM25, enhancing BLM retainment at replication forks and therefore promoting stalled replication fork restart. Positively regulates the homologous recombination-mediated DNA double-strand break (DSB) repair pathway by regulating ATM activation and RAD51 recruitment to DSBs in oocytes. Thereby contributes to oocyte survival and the resumption and completion of meiosis. The protein is Oocyte-expressed protein (OOEP) of Canis lupus familiaris (Dog).